The following is a 930-amino-acid chain: Bifunctional uridylyltransferase/uridylyl-removing enzyme (930 aa).

The tract at residues 1-387 (MAPASEAGPA…IMGLFRRKKR (387 aa)) is uridylyltransferase. Positions 388–741 (LKPEYSLVNG…LDPDPDRDAT (354 aa)) are uridylyl-removing. One can recognise an HD domain in the interval 504-626 (VDEHTIQCIS…VRSKKRLDLL (123 aa)). ACT domains follow at residues 742–818 (RACF…VVAR) and 852–927 (IIEV…GAER).

The protein belongs to the GlnD family. Mg(2+) is required as a cofactor.

It carries out the reaction [protein-PII]-L-tyrosine + UTP = [protein-PII]-uridylyl-L-tyrosine + diphosphate. The catalysed reaction is [protein-PII]-uridylyl-L-tyrosine + H2O = [protein-PII]-L-tyrosine + UMP + H(+). Uridylyltransferase (UTase) activity is inhibited by glutamine, while glutamine activates uridylyl-removing (UR) activity. Its function is as follows. Modifies, by uridylylation and deuridylylation, the PII regulatory proteins (GlnB and homologs), in response to the nitrogen status of the cell that GlnD senses through the glutamine level. Under low glutamine levels, catalyzes the conversion of the PII proteins and UTP to PII-UMP and PPi, while under higher glutamine levels, GlnD hydrolyzes PII-UMP to PII and UMP (deuridylylation). Thus, controls uridylylation state and activity of the PII proteins, and plays an important role in the regulation of nitrogen fixation and metabolism. The protein is Bifunctional uridylyltransferase/uridylyl-removing enzyme of Cereibacter sphaeroides (strain ATCC 17023 / DSM 158 / JCM 6121 / CCUG 31486 / LMG 2827 / NBRC 12203 / NCIMB 8253 / ATH 2.4.1.) (Rhodobacter sphaeroides).